Consider the following 334-residue polypeptide: MKVKVGINGYGTIGKRVAYAVSKQDDMELIGVTKTKPDFEAYLARERGIPVYAASEEFLPRFEKAGFEVAGTLSDLLENVDVIVDATPGGMGAKNKALYEKAGVKAIFQGGEKAEVAQVSFVAQANYEKALGKDYVRVVSCNTTGLTRTLSALQEYIDYVYAVMIRRAADPNDSKRGPVNAITPSVTVPSHHGPDVQTVIPINIETMAFVVPTTLMHVHSVMIELKKPITREDVIDIFENTTRVLLFEKERGFESTAQLIEFARDLHREWNNLYEIAVWKESISVKGNRLFYIQAVHQESDVVPENVDAIRAMFEMADKWESIRKTNKSLGILK.

NAD(+) contacts are provided by residues 12 to 13 (TI) and glycine 111. 140–142 (SCN) lines the D-glyceraldehyde 3-phosphate pocket. Cysteine 141 functions as the Nucleophile in the catalytic mechanism. Arginine 167 contacts NAD(+). Position 192–193 (192–193 (HG)) interacts with D-glyceraldehyde 3-phosphate. Glutamine 298 contacts NAD(+).

This sequence belongs to the glyceraldehyde-3-phosphate dehydrogenase family. In terms of assembly, homotetramer.

Its subcellular location is the cytoplasm. The enzyme catalyses D-glyceraldehyde 3-phosphate + phosphate + NADP(+) = (2R)-3-phospho-glyceroyl phosphate + NADPH + H(+). It catalyses the reaction D-glyceraldehyde 3-phosphate + phosphate + NAD(+) = (2R)-3-phospho-glyceroyl phosphate + NADH + H(+). The protein operates within carbohydrate degradation; glycolysis; pyruvate from D-glyceraldehyde 3-phosphate: step 1/5. This is Glyceraldehyde-3-phosphate dehydrogenase from Thermococcus kodakarensis (strain ATCC BAA-918 / JCM 12380 / KOD1) (Pyrococcus kodakaraensis (strain KOD1)).